The sequence spans 73 residues: MALPNIADARKLGDEELATEILATKQRLFQLRFQQATRRPENPHEFKHARHRLAQLLTVERERQLENSPSEEA.

The protein belongs to the universal ribosomal protein uL29 family.

The polypeptide is Large ribosomal subunit protein uL29 (rpmC) (Synechocystis sp. (strain ATCC 27184 / PCC 6803 / Kazusa)).